The primary structure comprises 284 residues: tRNA uridine(34) hydroxylase (284 aa).

Positions alanine 132–tyrosine 226 constitute a Rhodanese domain. The active-site Cysteine persulfide intermediate is cysteine 186.

It belongs to the TrhO family.

It carries out the reaction uridine(34) in tRNA + AH2 + O2 = 5-hydroxyuridine(34) in tRNA + A + H2O. Its function is as follows. Catalyzes oxygen-dependent 5-hydroxyuridine (ho5U) modification at position 34 in tRNAs. This chain is tRNA uridine(34) hydroxylase, found in Burkholderia ambifaria (strain MC40-6).